A 503-amino-acid chain; its full sequence is GMP synthase [glutamine-hydrolyzing] (503 aa).

The 189-residue stretch at Met-1–Asp-189 folds into the Glutamine amidotransferase type-1 domain. Residue Cys-78 is the Nucleophile of the active site. Active-site residues include His-164 and Glu-166. The GMPS ATP-PPase domain occupies Trp-190–Arg-378. Ser-217–Ser-223 is a binding site for ATP.

Homodimer.

It catalyses the reaction XMP + L-glutamine + ATP + H2O = GMP + L-glutamate + AMP + diphosphate + 2 H(+). It participates in purine metabolism; GMP biosynthesis; GMP from XMP (L-Gln route): step 1/1. Functionally, catalyzes the synthesis of GMP from XMP. This Thermus thermophilus (strain ATCC BAA-163 / DSM 7039 / HB27) protein is GMP synthase [glutamine-hydrolyzing].